The chain runs to 189 residues: MLFPRIIAASAQRKLSVYLKKGGLVAYPTESCYGLGCLPTLAKALGKLAHLKKRPQHKGMIVIGNQFEQLQPLLQMPSENLQDMLRKEWPAPKTFLLSAKSCVLPELRGKQRSKLAVRVPAHVGARRLCQALQTPLVSTSCNRAGKRACRTEREVRRQFGRDVWIVGGRIGRQKSPSQIIDGETGKRLR.

Positions 9 to 189 (ASAQRKLSVY…IDGETGKRLR (181 aa)) constitute a YrdC-like domain.

This sequence belongs to the SUA5 family. TsaC subfamily.

The protein localises to the cytoplasm. The catalysed reaction is L-threonine + hydrogencarbonate + ATP = L-threonylcarbamoyladenylate + diphosphate + H2O. In terms of biological role, required for the formation of a threonylcarbamoyl group on adenosine at position 37 (t(6)A37) in tRNAs that read codons beginning with adenine. Catalyzes the conversion of L-threonine, HCO(3)(-)/CO(2) and ATP to give threonylcarbamoyl-AMP (TC-AMP) as the acyladenylate intermediate, with the release of diphosphate. The chain is Threonylcarbamoyl-AMP synthase from Neisseria meningitidis serogroup C (strain 053442).